Here is a 432-residue protein sequence, read N- to C-terminus: C(50) beta-cyclic carotenoids biosynthesis protein LbtBC (432 aa).

Residues M1–R140 form a beta-cyclase region. Transmembrane regions (helical) follow at residues L4 to A24, L36 to I56, and F83 to S103. The disordered stretch occupies residues G111–R140. Residues P141 to S432 are elongase/hydratase. Transmembrane regions (helical) follow at residues Y170–V190, E252–L272, I277–W297, I299–G319, A350–A370, A374–V394, and F409–L429.

This sequence belongs to the UbiA prenyltransferase family. In terms of assembly, may form a complex with LbtA.

It is found in the cell membrane. It carries out the reaction all-trans-lycopene + dimethylallyl diphosphate + H2O = dihydroisopentenyldehydrorhodopin + diphosphate. The enzyme catalyses isopentenyldehydrorhodopin + dimethylallyl diphosphate + H2O = dihydrobisanhydrobacterioruberin + diphosphate. It participates in carotenoid biosynthesis. Functionally, involved in the biosynthesis of C(50) beta-cyclic carotenoids. The elongase/hydratase domain catalyzes the elongation of lycopene by attaching a C(5) isoprene unit at C-2, as well as the hydroxylation of the previous end of the molecule. The enzyme acts at both ends of the substrate, and catalyzes the conversion of lycopene to the C(45) intermediate dihydroisopentenyldehydrorhodopin (DH-IDR) and the conversion of isopentenyldehydrorhodopin (IDR) to the C(50) carotenoid dihydrobisanhydrobacterioruberin (DH-BABR). The beta-cyclase domain may produce the C(50) beta-cyclic carotenoid C.p.450 from the C(50) carotenoid dihydrobisanhydrobacterioruberin (DH-BABR). This chain is C(50) beta-cyclic carotenoids biosynthesis protein LbtBC, found in Dietzia sp. (strain CQ4).